A 181-amino-acid polypeptide reads, in one-letter code: Bradykinin potentiating and C-type natriuretic peptides (181 aa).

An N-terminal signal peptide occupies residues 1–23; it reads MFVSRLAASGLLLLALLAVSLDG. A propeptide spanning residues 24-27 is cleaved from the precursor; it reads KPLQ. 2 positions are modified to pyrrolidone carboxylic acid: Q28 and Q31. A propeptide spanning residues 41–43 is cleaved from the precursor; that stretch reads LVV. Q44 carries the pyrrolidone carboxylic acid modification. The propeptide occupies 50-52; the sequence is TQL. At Q53 the chain carries Pyrrolidone carboxylic acid. Residues 59 to 159 constitute a propeptide that is removed on maturation; that stretch reads AGGTTALREE…ARRLKGLAKK (101 aa). Residues 74 to 150 are disordered; it reads EAALDTPPAG…GGGCGGGGGA (77 aa). Residues 104-114 are compositionally biased toward low complexity; the sequence is SKGASATSAAS. A compositionally biased stretch (gly residues) spans 140–150; it reads AGGGCGGGGGA. A disulfide bridge links C165 with C181.

This sequence in the N-terminal section; belongs to the bradykinin-potentiating peptide family. It in the C-terminal section; belongs to the natriuretic peptide family. Venom gland.

Its subcellular location is the secreted. Its function is as follows. Bradykinin-potentiating peptide both inhibits the activity of the angiotensin-converting enzyme (ACE) and enhances the action of bradykinin by inhibiting the peptidases that inactivate it. It acts as an indirect hypotensive agent. Synthetic Cdt1a, Cdt1b and the short hexapeptide Cdt3 are able to potentiate the hypotensive effect mediated by Bk on the blood pressure of anesthetized rats. In terms of biological role, has a vasorelaxant activity in rat aortic strips and a diuretic potency in anesthetized rats. May act by activating natriuretic receptors (NPR1 and/or NPR2). This is Bradykinin potentiating and C-type natriuretic peptides from Crotalus durissus terrificus (South American rattlesnake).